We begin with the raw amino-acid sequence, 146 residues long: Hemoglobin subunit beta-1 (146 aa).

Residues 2–146 (EWTDKERAII…VVSALGKQYH (145 aa)) form the Globin domain. Residues His-63 and His-92 each coordinate heme b.

It belongs to the globin family. Hb 1 is a heterotetramer of two alpha-1 and two beta-1 chains. Red blood cells.

Its function is as follows. Involved in oxygen transport from gills to the various peripheral tissues. The polypeptide is Hemoglobin subunit beta-1 (hbb1) (Gobionotothen gibberifrons (Humped rockcod)).